The sequence spans 301 residues: Probable alpha-L-glutamate ligase (301 aa).

The ATP-grasp domain maps to 104–287 (LQLLSRKGIG…VADEIIRFIE (184 aa)). ATP is bound by residues Lys-141, 178-179 (EF), Asp-187, and 211-213 (RSN). Mg(2+) is bound by residues Asp-248, Glu-260, and Asn-262. Positions 248, 260, and 262 each coordinate Mn(2+).

Belongs to the RimK family. Mg(2+) is required as a cofactor. The cofactor is Mn(2+).

This chain is Probable alpha-L-glutamate ligase, found in Syntrophotalea carbinolica (strain DSM 2380 / NBRC 103641 / GraBd1) (Pelobacter carbinolicus).